The following is a 601-amino-acid chain: Deoxyhypusine synthase (601 aa).

NAD(+) is bound by residues 109-113 (ANLMG) and 184-186 (SGG). 189 to 190 (EH) is a binding site for spermidine. The tract at residues 210 to 242 (GHVSSTVSSEATAPPKGLQQRAEKPLGTRAAAG) is disordered. Over residues 211-220 (HVSSTVSSEA) the composition is skewed to polar residues. Asp-398 serves as a coordination point for NAD(+). The interval 411-451 (PAARPAHRKGGPVADENAGNSKELKRSRKASSSSSTSATAV) is disordered. The segment covering 440-451 (ASSSSSTSATAV) has biased composition (low complexity). Gly-489 contacts NAD(+). Residue His-494 participates in spermidine binding. 514 to 515 (NG) contacts NAD(+). Spermidine-binding positions include 520–522 (GSD) and 529–535 (EALSWGK). The active-site Nucleophile is the Lys-535. 548 to 549 (EV) contacts NAD(+). The segment at 568–601 (RRATDDAQPRRKRSSRGARPPQDVSGHSHLCRGE) is disordered.

The protein belongs to the deoxyhypusine synthase family. As to quaternary structure, homodimer. Requires NAD(+) as cofactor.

It catalyses the reaction [eIF5A protein]-L-lysine + spermidine = [eIF5A protein]-deoxyhypusine + propane-1,3-diamine. Its pathway is protein modification; eIF5A hypusination. N1-guanyl-1,7-diaminoheptane has a small inhibitory effect on activity. Its function is as follows. Catalyzes the NAD-dependent oxidative cleavage of spermidine and the subsequent transfer of the butylamine moiety of spermidine to the epsilon-amino group of a specific lysine residue of the eIF-5A precursor protein to form the intermediate deoxyhypusine residue. In Leishmania donovani, this protein is Deoxyhypusine synthase.